Reading from the N-terminus, the 211-residue chain is Glutathione S-transferase (211 aa).

A GST N-terminal domain is found at 3-87 (DNIVLYYFDA…YLSKKYNICG (85 aa)). Glutathione contacts are provided by residues 58-59 (QV), 71-72 (QS), D105, K117, and T121. A GST C-terminal domain is found at 89 to 211 (SELNEFYADM…YITNRKESVY (123 aa)).

It belongs to the GST superfamily. Homodimer. In the absence of ligands two homodimers may interact to form a tetramer.

It catalyses the reaction RX + glutathione = an S-substituted glutathione + a halide anion + H(+). With respect to regulation, inhibited by chloroquine, cibacron blue, ferriprotoporphyrin IX (hemin) and S-hexylglutathione. Its function is as follows. Conjugation of reduced glutathione to a wide number of exogenous and endogenous hydrophobic electrophiles. May also function as a storage protein or ligandin for parasitotoxic ferriprotoporphyrin IX (hemin). This Plasmodium falciparum (isolate 3D7) protein is Glutathione S-transferase.